Reading from the N-terminus, the 508-residue chain is Glucose-1-phosphate adenylyltransferase small subunit 1, chloroplastic (508 aa).

Residues 1-27 (MSSIVTSGVINVPRSSSSSKNLSFSSS) are disordered. Residues 1-59 (MSSIVTSGVINVPRSSSSSKNLSFSSSSQLSGNKILTVSGNGAPRGRCTLKHVFLTPKA) constitute a chloroplast transit peptide. Low complexity predominate over residues 15–27 (SSSSSKNLSFSSS).

The protein belongs to the bacterial/plant glucose-1-phosphate adenylyltransferase family. Heterotetramer. In terms of tissue distribution, seeds.

The protein localises to the plastid. Its subcellular location is the chloroplast. It catalyses the reaction alpha-D-glucose 1-phosphate + ATP + H(+) = ADP-alpha-D-glucose + diphosphate. It participates in glycan biosynthesis; starch biosynthesis. With respect to regulation, activated by 3'phosphoglycerate, inhibited by orthophosphate. Allosteric regulation. In terms of biological role, this protein plays a role in synthesis of starch. It catalyzes the synthesis of the activated glycosyl donor, ADP-glucose from Glc-1-P and ATP. This chain is Glucose-1-phosphate adenylyltransferase small subunit 1, chloroplastic (AGPC), found in Vicia faba (Broad bean).